A 370-amino-acid chain; its full sequence is Histidinol-phosphate aminotransferase 2 (370 aa).

Lysine 230 is modified (N6-(pyridoxal phosphate)lysine).

This sequence belongs to the class-II pyridoxal-phosphate-dependent aminotransferase family. Histidinol-phosphate aminotransferase subfamily. In terms of assembly, homodimer. Pyridoxal 5'-phosphate serves as cofactor.

The catalysed reaction is L-histidinol phosphate + 2-oxoglutarate = 3-(imidazol-4-yl)-2-oxopropyl phosphate + L-glutamate. Its pathway is amino-acid biosynthesis; L-histidine biosynthesis; L-histidine from 5-phospho-alpha-D-ribose 1-diphosphate: step 7/9. This is Histidinol-phosphate aminotransferase 2 from Pseudomonas fluorescens (strain ATCC BAA-477 / NRRL B-23932 / Pf-5).